The chain runs to 171 residues: Large ribosomal subunit protein uL10 (171 aa).

It belongs to the universal ribosomal protein uL10 family. Part of the ribosomal stalk of the 50S ribosomal subunit. The N-terminus interacts with L11 and the large rRNA to form the base of the stalk. The C-terminus forms an elongated spine to which L12 dimers bind in a sequential fashion forming a multimeric L10(L12)X complex.

Its function is as follows. Forms part of the ribosomal stalk, playing a central role in the interaction of the ribosome with GTP-bound translation factors. The chain is Large ribosomal subunit protein uL10 from Nitrosomonas eutropha (strain DSM 101675 / C91 / Nm57).